The chain runs to 315 residues: Nucleotide-binding protein CGSHiEE_06315 (315 aa).

Glycine 8–serine 15 contributes to the ATP binding site. Residue aspartate 56–asparagine 59 participates in GTP binding.

The protein belongs to the RapZ-like family.

Functionally, displays ATPase and GTPase activities. This is Nucleotide-binding protein CGSHiEE_06315 from Haemophilus influenzae (strain PittEE).